The sequence spans 389 residues: Acetylornithine aminotransferase (389 aa).

Residues 96–97 and Phe123 contribute to the pyridoxal 5'-phosphate site; that span reads GT. N(2)-acetyl-L-ornithine is bound at residue Arg126. 207 to 210 is a pyridoxal 5'-phosphate binding site; the sequence is DEVQ. Lys236 carries the post-translational modification N6-(pyridoxal phosphate)lysine. A N(2)-acetyl-L-ornithine-binding site is contributed by Ser264. Position 265 (Thr265) interacts with pyridoxal 5'-phosphate.

Belongs to the class-III pyridoxal-phosphate-dependent aminotransferase family. ArgD subfamily. In terms of assembly, homodimer. Pyridoxal 5'-phosphate serves as cofactor.

Its subcellular location is the cytoplasm. The catalysed reaction is N(2)-acetyl-L-ornithine + 2-oxoglutarate = N-acetyl-L-glutamate 5-semialdehyde + L-glutamate. Its pathway is amino-acid biosynthesis; L-arginine biosynthesis; N(2)-acetyl-L-ornithine from L-glutamate: step 4/4. This Lactiplantibacillus plantarum (strain ATCC BAA-793 / NCIMB 8826 / WCFS1) (Lactobacillus plantarum) protein is Acetylornithine aminotransferase.